We begin with the raw amino-acid sequence, 506 residues long: Maturase K (506 aa).

It belongs to the intron maturase 2 family. MatK subfamily.

Its subcellular location is the plastid. The protein resides in the chloroplast. Its function is as follows. Usually encoded in the trnK tRNA gene intron. Probably assists in splicing its own and other chloroplast group II introns. This chain is Maturase K, found in Trifolium spumosum (Mediterranean clover).